We begin with the raw amino-acid sequence, 1818 residues long: Cytadherence high molecular weight protein 2 (1818 aa).

Coiled-coil stretches lie at residues 31 to 880 (LESA…KQRE), 919 to 1607 (ELKI…DNKH), 1644 to 1755 (HLFE…QAVQ), and 1786 to 1817 (LATQ…QKAA).

In terms of processing, phosphorylated mainly on serine residues.

Its function is as follows. Component of the cytoskeleton-like structure which stabilizes the shape of the wall-less Mycoplasma. This cytoskeleton-like network of accessory proteins containing HMW proteins 1 to 5 allows the proper anchoring of cytadhesin proteins in the mycoplasmal membrane at the attachment organelle. The chain is Cytadherence high molecular weight protein 2 (hmw2) from Mycoplasma pneumoniae (strain ATCC 29342 / M129 / Subtype 1) (Mycoplasmoides pneumoniae).